The following is a 1256-amino-acid chain: N-acetylglucosamine-1-phosphotransferase subunits alpha/beta (1256 aa).

Residues 22-42 (VCFLGVVVTIVSAFQFGEVVL) form a helical membrane-spanning segment. Residues N83, N114, N148, N179, and N250 are each glycosylated (N-linked (GlcNAc...) asparagine). Intrachain disulfides connect C438–C461, C452–C468, C505–C528, and C519–C535. LNR repeat units lie at residues 438-473 (CAEG…GNSG) and 505-545 (CNQG…ELYK). Ca(2+) contacts are provided by D449, D464, D467, D516, D531, and D534. Residues N614, N699, N729, N829, and N1009 are each glycosylated (N-linked (GlcNAc...) asparagine). One can recognise a DMAP1-binding domain in the interval 699 to 798 (NISLLPKDAQ…TFPAVSVKVN (100 aa)). An EF-hand domain is found at 1005-1040 (VQPLNISQVFDEVDTDQSGVLSDREIRTLATRIHEL). Ca(2+)-binding residues include D1018, D1020, S1022, and E1029. N-linked (GlcNAc...) asparagine glycosylation occurs at N1129. A helical transmembrane segment spans residues 1215-1235 (VLATLIMFTIFSFFAEQLIAL).

It belongs to the stealth family. In terms of assembly, hexamer of two alpha, two beta and two gamma (GNPTG) subunits; disulfide-linked. The alpha and/or the beta subunits of the enzyme constitute the catalytic subunits. Interacts with LYSET; facilitates proper localization of GNPTAB. Post-translationally, the alpha- and beta-subunits are generated by a proteolytic cleavage by MBTPS1 protease at the Lys-928-Asp-929 bond. In terms of tissue distribution, expressed in the heart, whole brain, placenta, lung, liver, skeletal muscle, kidney and pancreas.

It localises to the golgi apparatus membrane. It carries out the reaction N(4)-[alpha-D-mannosyl-(1-&gt;2)-alpha-D-mannosyl-(glycan)]-L-asparaginyl-[protein] + UDP-N-acetyl-alpha-D-glucosamine = N(4)-[6-(N-acetyl-alpha-D-glucosaminyl-1-phospho)-alpha-D-mannosyl-(1-&gt;2)-alpha-D-mannosyl-(glycan)]-L-asparaginyl-[protein] + UMP + H(+). Catalyzes the formation of mannose 6-phosphate (M6P) markers on high mannose type oligosaccharides in the Golgi apparatus. M6P residues are required to bind to the M6P receptors (MPR), which mediate the vesicular transport of lysosomal enzymes to the endosomal/prelysosomal compartment. The polypeptide is N-acetylglucosamine-1-phosphotransferase subunits alpha/beta (GNPTAB) (Homo sapiens (Human)).